Reading from the N-terminus, the 1377-residue chain is DNA-directed RNA polymerase subunit beta (1377 aa).

Belongs to the RNA polymerase beta chain family. In terms of assembly, the RNAP catalytic core consists of 2 alpha, 1 beta, 1 beta' and 1 omega subunit. When a sigma factor is associated with the core the holoenzyme is formed, which can initiate transcription.

The catalysed reaction is RNA(n) + a ribonucleoside 5'-triphosphate = RNA(n+1) + diphosphate. Functionally, DNA-dependent RNA polymerase catalyzes the transcription of DNA into RNA using the four ribonucleoside triphosphates as substrates. This Aromatoleum aromaticum (strain DSM 19018 / LMG 30748 / EbN1) (Azoarcus sp. (strain EbN1)) protein is DNA-directed RNA polymerase subunit beta.